A 772-amino-acid polypeptide reads, in one-letter code: Semaphorin-3A (772 aa).

An N-terminal signal peptide occupies residues 1–20 (MGWFTGIACLFWGILLTARA). The region spanning 31-514 (RLKLSYKEML…STAGVAQLPL (484 aa)) is the Sema domain. N53 carries N-linked (GlcNAc...) asparagine glycosylation. The cysteines at positions 103 and 114 are disulfide-linked. N125 is a glycosylation site (N-linked (GlcNAc...) asparagine). Intrachain disulfides connect C132–C141, C269–C381, C293–C341, and C517–C535. Positions 577-665 (HGHSLEERII…GFMQTLLKVT (89 aa)) constitute an Ig-like C2-type domain. N591 is a glycosylation site (N-linked (GlcNAc...) asparagine). A disulfide bond links C650 and C723. Residues 677–691 (LLHKDDDGDGSKTKE) show a composition bias toward basic and acidic residues. Disordered regions lie at residues 677–698 (LLHK…SMTP) and 729–772 (RDRK…PRSV). A compositionally biased stretch (basic residues) spans 729-738 (RDRKQRRQRP). Basic and acidic residues predominate over residues 750–772 (HMQESKKGRNRRTHEFERAPRSV).

Belongs to the semaphorin family. Interacts with PLXND1. Expressed in the dorsal root ganglia.

The protein localises to the secreted. In terms of biological role, may be involved in guiding growing axons towards their targets by forming a molecular boundary that instructs axons to engage in the formation of specific nerve tracts. Binds to neuropilin. Involved in the development of the olfactory system and in neuronal control of puberty. This Rattus norvegicus (Rat) protein is Semaphorin-3A (Sema3a).